Reading from the N-terminus, the 321-residue chain is Lipoyl synthase (321 aa).

Residues C68, C73, C79, C94, C98, C101, and S308 each coordinate [4Fe-4S] cluster. Residues 80-297 enclose the Radical SAM core domain; the sequence is FNHGTATFMI…KEQALAMGFT (218 aa).

This sequence belongs to the radical SAM superfamily. Lipoyl synthase family. Requires [4Fe-4S] cluster as cofactor.

It localises to the cytoplasm. It catalyses the reaction [[Fe-S] cluster scaffold protein carrying a second [4Fe-4S](2+) cluster] + N(6)-octanoyl-L-lysyl-[protein] + 2 oxidized [2Fe-2S]-[ferredoxin] + 2 S-adenosyl-L-methionine + 4 H(+) = [[Fe-S] cluster scaffold protein] + N(6)-[(R)-dihydrolipoyl]-L-lysyl-[protein] + 4 Fe(3+) + 2 hydrogen sulfide + 2 5'-deoxyadenosine + 2 L-methionine + 2 reduced [2Fe-2S]-[ferredoxin]. It participates in protein modification; protein lipoylation via endogenous pathway; protein N(6)-(lipoyl)lysine from octanoyl-[acyl-carrier-protein]: step 2/2. Catalyzes the radical-mediated insertion of two sulfur atoms into the C-6 and C-8 positions of the octanoyl moiety bound to the lipoyl domains of lipoate-dependent enzymes, thereby converting the octanoylated domains into lipoylated derivatives. The chain is Lipoyl synthase from Proteus mirabilis (strain HI4320).